Consider the following 35-residue polypeptide: Dolichyl-diphosphooligosaccharide--protein glycosyltransferase subunit 4C (35 aa).

At 1–8 the chain is on the lumenal side; that stretch reads MFDDQDLG. The chain crosses the membrane as a helical span at residues 9–29; that stretch reads FFANFLGIFIFILVIAYHFVM. The Cytoplasmic portion of the chain corresponds to 30–35; the sequence is ADPKFE.

The protein belongs to the OST4 family. In terms of assembly, component of the oligosaccharyltransferase (OST) complex.

The protein resides in the endoplasmic reticulum membrane. Its function is as follows. Subunit of the oligosaccharyl transferase (OST) complex that catalyzes the initial transfer of a defined glycan (Glc(3)Man(9)GlcNAc(2) in eukaryotes) from the lipid carrier dolichol-pyrophosphate to an asparagine residue within an Asn-X-Ser/Thr consensus motif in nascent polypeptide chains, the first step in protein N-glycosylation. N-glycosylation occurs cotranslationally and the complex associates with the Sec61 complex at the channel-forming translocon complex that mediates protein translocation across the endoplasmic reticulum (ER). All subunits are required for a maximal enzyme activity. The chain is Dolichyl-diphosphooligosaccharide--protein glycosyltransferase subunit 4C (OST4C) from Arabidopsis thaliana (Mouse-ear cress).